We begin with the raw amino-acid sequence, 361 residues long: Nicotinate-nucleotide--dimethylbenzimidazole phosphoribosyltransferase (361 aa).

E315 acts as the Proton acceptor in catalysis.

The protein belongs to the CobT family.

It catalyses the reaction 5,6-dimethylbenzimidazole + nicotinate beta-D-ribonucleotide = alpha-ribazole 5'-phosphate + nicotinate + H(+). The protein operates within nucleoside biosynthesis; alpha-ribazole biosynthesis; alpha-ribazole from 5,6-dimethylbenzimidazole: step 1/2. Its function is as follows. Catalyzes the synthesis of alpha-ribazole-5'-phosphate from nicotinate mononucleotide (NAMN) and 5,6-dimethylbenzimidazole (DMB). In Clostridium perfringens (strain 13 / Type A), this protein is Nicotinate-nucleotide--dimethylbenzimidazole phosphoribosyltransferase.